The chain runs to 218 residues: Non-structural protein NP-1 (218 aa).

Disordered regions lie at residues 1-89 (MSSG…RTNP) and 195-218 (TESE…DASN). 2 stretches are compositionally biased toward basic residues: residues 8–18 (DKHRAYKRKGS) and 27–40 (PWQP…RSPI). The span at 58–67 (SHLSSCTASK) shows a compositional bias: polar residues. Residues 73 to 86 (TKTKENTSGKRDSR) show a composition bias toward basic and acidic residues. Residues 196 to 205 (ESEEITDEEM) are compositionally biased toward acidic residues.

It belongs to the Bocaparvovirus Non-structural protein NP-1 family.

The protein resides in the host nucleus. In terms of biological role, required for the expression of the capsid proteins. Performs the splicing and internal polyadenylation of the viral capsid-encoding mRNA precursor, which allows its maturation and expression. Transactivates the viral promoter. This chain is Non-structural protein NP-1 (NP1), found in Human bocavirus 3 (HBoV3).